Here is a 427-residue protein sequence, read N- to C-terminus: Glutamate-1-semialdehyde 2,1-aminomutase (427 aa).

The residue at position 265 (lysine 265) is an N6-(pyridoxal phosphate)lysine.

Belongs to the class-III pyridoxal-phosphate-dependent aminotransferase family. HemL subfamily. As to quaternary structure, homodimer. Requires pyridoxal 5'-phosphate as cofactor.

Its subcellular location is the cytoplasm. The catalysed reaction is (S)-4-amino-5-oxopentanoate = 5-aminolevulinate. It participates in porphyrin-containing compound metabolism; protoporphyrin-IX biosynthesis; 5-aminolevulinate from L-glutamyl-tRNA(Glu): step 2/2. The sequence is that of Glutamate-1-semialdehyde 2,1-aminomutase from Teredinibacter turnerae (strain ATCC 39867 / T7901).